The chain runs to 488 residues: PTS system mannitol-specific EIICB component (488 aa).

The Cytoplasmic segment spans residues 1–26 (MRKKLAKVKVHIQSLDSLLSSMTMPI). Positions 15 to 362 (LDSLLSSMTM…LSLTRKKQLK (348 aa)) constitute a PTS EIIC type-2 domain. The helical transmembrane segment at 27 to 48 (IGIFIAWGLLASFFIPSGWTPD) threads the bilayer. Residues 49–52 (KNLA) lie on the Extracellular side of the membrane. Residues 53-73 (LMVGIGIQYVIPTIIXFFGGK) form a helical membrane-spanning segment. At 74-147 (KIYEIRGGVI…SGFEMLVNNF (74 aa)) the chain is on the cytoplasmic side. Residues 148 to 169 (YLGFLGFALIFPSFYLSIYLIG) form a helical membrane-spanning segment. Residues 170-178 (YIQLGLKLL) are Extracellular-facing. Residues 179 to 199 (VEIMQQYKLYPIAAIVIEPAK) form a helical membrane-spanning segment. Over 200–289 (VLFLNNAINH…VLLKPVLILA (90 aa)) the chain is Cytoplasmic. A helical membrane pass occupies residues 290-309 (TIAVGVVGNGILQIFNAGTI). Residues 310-331 (APVSPGSVIAGFLQINKTPLDV) lie on the Extracellular side of the membrane. The helical transmembrane segment at 332–353 (AGYALALVLSAVTSLLISLLLL) threads the bilayer. Residues 354–488 (SLTRKKQLKT…IIEKIKNEKN (135 aa)) lie on the Cytoplasmic side of the membrane. The region spanning 397-488 (SQVTFVCDAG…IIEKIKNEKN (92 aa)) is the PTS EIIB type-2 domain. The active-site Phosphocysteine intermediate; for EIIB activity is the C403. Residue C403 is modified to Phosphocysteine; by EIIA.

Homodimer.

It is found in the cell membrane. The catalysed reaction is D-mannitol(out) + N(pros)-phospho-L-histidyl-[protein] = D-mannitol 1-phosphate(in) + L-histidyl-[protein]. The phosphoenolpyruvate-dependent sugar phosphotransferase system (sugar PTS), a major carbohydrate active transport system, catalyzes the phosphorylation of incoming sugar substrates concomitantly with their translocation across the cell membrane. The enzyme II CmtAB PTS system is involved in D-mannitol transport. The sequence is that of PTS system mannitol-specific EIICB component (mtlA) from Mycoplasma pneumoniae (strain ATCC 29342 / M129 / Subtype 1) (Mycoplasmoides pneumoniae).